A 323-amino-acid chain; its full sequence is tRNA(Ile)-lysidine synthase (323 aa).

33–38 contacts ATP; that stretch reads SGGSDS.

This sequence belongs to the tRNA(Ile)-lysidine synthase family.

Its subcellular location is the cytoplasm. It catalyses the reaction cytidine(34) in tRNA(Ile2) + L-lysine + ATP = lysidine(34) in tRNA(Ile2) + AMP + diphosphate + H(+). Its function is as follows. Ligates lysine onto the cytidine present at position 34 of the AUA codon-specific tRNA(Ile) that contains the anticodon CAU, in an ATP-dependent manner. Cytidine is converted to lysidine, thus changing the amino acid specificity of the tRNA from methionine to isoleucine. The sequence is that of tRNA(Ile)-lysidine synthase from Mycobacterium leprae (strain TN).